Reading from the N-terminus, the 568-residue chain is Proline--tRNA ligase (568 aa).

Belongs to the class-II aminoacyl-tRNA synthetase family. ProS type 1 subfamily. As to quaternary structure, homodimer.

Its subcellular location is the cytoplasm. The catalysed reaction is tRNA(Pro) + L-proline + ATP = L-prolyl-tRNA(Pro) + AMP + diphosphate. Its function is as follows. Catalyzes the attachment of proline to tRNA(Pro) in a two-step reaction: proline is first activated by ATP to form Pro-AMP and then transferred to the acceptor end of tRNA(Pro). As ProRS can inadvertently accommodate and process non-cognate amino acids such as alanine and cysteine, to avoid such errors it has two additional distinct editing activities against alanine. One activity is designated as 'pretransfer' editing and involves the tRNA(Pro)-independent hydrolysis of activated Ala-AMP. The other activity is designated 'posttransfer' editing and involves deacylation of mischarged Ala-tRNA(Pro). The misacylated Cys-tRNA(Pro) is not edited by ProRS. The polypeptide is Proline--tRNA ligase (Chlamydia pneumoniae (Chlamydophila pneumoniae)).